The chain runs to 893 residues: Desmocollin-1 (893 aa).

An N-terminal signal peptide occupies residues 1–29 (MAVASAAPGSIFWKQLLFSLLVLILFCDA). The propeptide occupies 30–132 (CQKISLQVPS…KDAVLRRTKR (103 aa)). 5 consecutive Cadherin domains span residues 133–240 (RWAP…APYF), 241–352 (ENKL…APYF), 353–470 (TETS…GPEC), 471–574 (QPPV…DHPP), and 575–682 (QIKQ…LSRE). At 133–692 (RWAPIPCSLM…AALANVFLGK (560 aa)) the chain is on the extracellular side. An N-linked (GlcNAc...) asparagine glycan is attached at Asn-163. At Thr-383 the chain carries Phosphothreonine. Residues Asn-398 and Asn-545 are each glycosylated (N-linked (GlcNAc...) asparagine). A helical transmembrane segment spans residues 693-715 (WAILAMVLGSVLLLCILFTCFCV). The Cytoplasmic segment spans residues 716-893 (TVKKTVKKCF…RTLAKTCVKK (178 aa)).

As to quaternary structure, binds to JUP/plakoglobin. Post-translationally, isoform 1A is phosphorylated on a serine but isoform 1B is not. Epidermis and weakly in tongue papillae.

Its subcellular location is the cell membrane. The protein resides in the cell junction. It is found in the desmosome. Its function is as follows. A component of desmosome cell-cell junctions which are required for positive regulation of cellular adhesion. Required for desmosome adhesion strength between the granular layers of the epidermis, as a result moderates epidermal proliferation and differentiation. Is therefore required to maintain postnatal epidermal barrier function and normal hair follicle morphology into adulthood. This is Desmocollin-1 (DSC1) from Bos taurus (Bovine).